We begin with the raw amino-acid sequence, 236 residues long: 2-C-methyl-D-erythritol 4-phosphate cytidylyltransferase (236 aa).

Belongs to the IspD/TarI cytidylyltransferase family. IspD subfamily. Homodimer.

The catalysed reaction is 2-C-methyl-D-erythritol 4-phosphate + CTP + H(+) = 4-CDP-2-C-methyl-D-erythritol + diphosphate. It participates in isoprenoid biosynthesis; isopentenyl diphosphate biosynthesis via DXP pathway; isopentenyl diphosphate from 1-deoxy-D-xylulose 5-phosphate: step 2/6. Functionally, catalyzes the formation of 4-diphosphocytidyl-2-C-methyl-D-erythritol from CTP and 2-C-methyl-D-erythritol 4-phosphate (MEP). The sequence is that of 2-C-methyl-D-erythritol 4-phosphate cytidylyltransferase from Salmonella paratyphi B (strain ATCC BAA-1250 / SPB7).